The chain runs to 230 residues: CRP-like protein Clp (230 aa).

18-139 serves as a coordination point for a nucleoside 3',5'-cyclic phosphate; it reads PSLALDAGTI…APKILYAIGV (122 aa). An HTH crp-type domain is found at 158-230; that stretch reads LDVTDRIVRT…GKTVVLYGTR (73 aa). The segment at residues 190–209 is a DNA-binding region (H-T-H motif); the sequence is RQELARLVGCSREMAGRVLK.

Homodimer.

It localises to the cytoplasm. With respect to regulation, allosterically inhibited by cyclic di-GMP (c-di-GMP), which binds to Clp and abolishes its ability to bind its target gene promoter. In terms of biological role, global transcriptional regulator that regulates virulence factors production by activating or repressing the expression of a large set of genes in diffusible signal factor (DSF) pathway. In Xanthomonas oryzae pv. oryzae (strain MAFF 311018), this protein is CRP-like protein Clp (clp).